The primary structure comprises 176 residues: Peptide deformylase (176 aa).

Fe cation-binding residues include C100 and H142. E143 is a catalytic residue. Fe cation is bound at residue H146.

Belongs to the polypeptide deformylase family. Fe(2+) is required as a cofactor.

The catalysed reaction is N-terminal N-formyl-L-methionyl-[peptide] + H2O = N-terminal L-methionyl-[peptide] + formate. Functionally, removes the formyl group from the N-terminal Met of newly synthesized proteins. Requires at least a dipeptide for an efficient rate of reaction. N-terminal L-methionine is a prerequisite for activity but the enzyme has broad specificity at other positions. The chain is Peptide deformylase from Elusimicrobium minutum (strain Pei191).